Here is a 172-residue protein sequence, read N- to C-terminus: Translation initiation factor IF-3 (172 aa).

Belongs to the IF-3 family. In terms of assembly, monomer.

Its subcellular location is the cytoplasm. In terms of biological role, IF-3 binds to the 30S ribosomal subunit and shifts the equilibrium between 70S ribosomes and their 50S and 30S subunits in favor of the free subunits, thus enhancing the availability of 30S subunits on which protein synthesis initiation begins. This chain is Translation initiation factor IF-3, found in Haemophilus influenzae (strain ATCC 51907 / DSM 11121 / KW20 / Rd).